The sequence spans 195 residues: NADH-quinone oxidoreductase subunit B (195 aa).

Positions 74, 75, 139, and 169 each coordinate [4Fe-4S] cluster.

It belongs to the complex I 20 kDa subunit family. NDH-1 is composed of 14 different subunits. Subunits NuoB, C, D, E, F, and G constitute the peripheral sector of the complex. The cofactor is [4Fe-4S] cluster.

It localises to the cell inner membrane. It catalyses the reaction a quinone + NADH + 5 H(+)(in) = a quinol + NAD(+) + 4 H(+)(out). Functionally, NDH-1 shuttles electrons from NADH, via FMN and iron-sulfur (Fe-S) centers, to quinones in the respiratory chain. The immediate electron acceptor for the enzyme in this species is believed to be ubiquinone. Couples the redox reaction to proton translocation (for every two electrons transferred, four hydrogen ions are translocated across the cytoplasmic membrane), and thus conserves the redox energy in a proton gradient. This is NADH-quinone oxidoreductase subunit B from Methylorubrum populi (strain ATCC BAA-705 / NCIMB 13946 / BJ001) (Methylobacterium populi).